The primary structure comprises 828 residues: Periplasmic nitrate reductase (828 aa).

The tat-type signal signal peptide spans M1 to A31. In terms of domain architecture, 4Fe-4S Mo/W bis-MGD-type spans I39 to D95. Residues C46, C49, C53, and C81 each contribute to the [4Fe-4S] cluster site. Mo-bis(molybdopterin guanine dinucleotide)-binding positions include K83, Q150, N175, C179, W212–M219, S243–H247, Q262–D264, M372, Q376, N482, S508–D509, K531, D558, and T718–T727. F794 is a binding site for substrate. Mo-bis(molybdopterin guanine dinucleotide) is bound by residues N802 and K819.

The protein belongs to the prokaryotic molybdopterin-containing oxidoreductase family. NasA/NapA/NarB subfamily. As to quaternary structure, component of the periplasmic nitrate reductase NapAB complex composed of NapA and NapB. Requires [4Fe-4S] cluster as cofactor. The cofactor is Mo-bis(molybdopterin guanine dinucleotide). In terms of processing, predicted to be exported by the Tat system. The position of the signal peptide cleavage has not been experimentally proven.

Its subcellular location is the periplasm. The catalysed reaction is 2 Fe(II)-[cytochrome] + nitrate + 2 H(+) = 2 Fe(III)-[cytochrome] + nitrite + H2O. Catalytic subunit of the periplasmic nitrate reductase complex NapAB. Receives electrons from NapB and catalyzes the reduction of nitrate to nitrite. This Salmonella dublin (strain CT_02021853) protein is Periplasmic nitrate reductase.